Here is a 235-residue protein sequence, read N- to C-terminus: Type III pantothenate kinase (235 aa).

6–13 (DVGNTSLK) serves as a coordination point for ATP. Substrate is bound by residues Tyr-79 and 86-89 (GIDR). Catalysis depends on Asp-88, which acts as the Proton acceptor. A K(+)-binding site is contributed by Asp-109. ATP is bound at residue Thr-112. Thr-164 contacts substrate.

The protein belongs to the type III pantothenate kinase family. In terms of assembly, homodimer. It depends on NH4(+) as a cofactor. K(+) serves as cofactor.

The protein localises to the cytoplasm. The enzyme catalyses (R)-pantothenate + ATP = (R)-4'-phosphopantothenate + ADP + H(+). It participates in cofactor biosynthesis; coenzyme A biosynthesis; CoA from (R)-pantothenate: step 1/5. In terms of biological role, catalyzes the phosphorylation of pantothenate (Pan), the first step in CoA biosynthesis. This is Type III pantothenate kinase from Pseudoalteromonas translucida (strain TAC 125).